A 327-amino-acid polypeptide reads, in one-letter code: MYQSLMTVRETQIAIKEVKTFFEDQLAKRLELFRVSAPLFVTKKSGLNDHLNGVERPIEFDMLHSGEELEIVHSLAKWKRFALHEYGYEAGEGLYTNMNAIRRDEELDATHSIYVDQWDWEKIVQKEWRTVDYLQKTVLTIYGIFKDLEDHLFEKYPFLGKYLPEEIVFVTSQELEDKYPELTPKDREHAIAKEHGAVFIIGIGDALRSGEKHDGRAADYDDWKLNGDILFWHPVLQSSFELSSMGIRVDSKSLDEQLTKTGEDYKREYDFHKGILEDVLPLTIGGGIGQSRMCMYFLRKAHIGEVQSSVWPDDLREACKKENIHLF.

Belongs to the class-II aminoacyl-tRNA synthetase family. AsnA subfamily.

Its subcellular location is the cytoplasm. The catalysed reaction is L-aspartate + NH4(+) + ATP = L-asparagine + AMP + diphosphate + H(+). It participates in amino-acid biosynthesis; L-asparagine biosynthesis; L-asparagine from L-aspartate (ammonia route): step 1/1. This chain is Aspartate--ammonia ligase, found in Bacillus cereus (strain AH187).